Here is a 465-residue protein sequence, read N- to C-terminus: Fujikurins efflux protein FFUJ_12242 (465 aa).

The disordered stretch occupies residues 1 to 66 (MATNVGGAVD…AAKAHDEGPP (66 aa)). Basic and acidic residues predominate over residues 11–28 (NSRRSISDNRHDPEKPAE). Helical transmembrane passes span 70 to 90 (TAAW…PGWI), 115 to 135 (WIPS…GIIF), 142 to 162 (PLII…SLAK), 175 to 195 (SAIG…TWFL), 200 to 220 (AAMG…PIMI), 231 to 251 (WALR…CLTV), and 274 to 294 (PAFA…YIPI). The N-linked (GlcNAc...) asparagine glycan is linked to N310. 5 consecutive transmembrane segments (helical) span residues 314 to 334 (YLVA…GYGA), 342 to 362 (MFII…IPAT), 368 to 388 (IGYA…VGAL), 404 to 424 (IVFL…GAIL), and 430 to 450 (GWVS…AIIL).

It belongs to the major facilitator superfamily. Monocarboxylate porter (TC 2.A.1.13) family.

The protein resides in the cell membrane. Functionally, efflux pump that may be involved in the secretion of fujikurins. The sequence is that of Fujikurins efflux protein FFUJ_12242 from Gibberella fujikuroi (strain CBS 195.34 / IMI 58289 / NRRL A-6831) (Bakanae and foot rot disease fungus).